The primary structure comprises 292 residues: MRLVGSQYKDMEDRLSPSARLVRSPGSQTRIHSIESILGFKGETLFHPAFPYGSGKTGKDTEHLSPKKDSNKHFDGVCRSTVMVSPDLPDADGGKLSDDENPKKKHRRNRTTFTTFQLHELERAFEKSHYPDVYSREELALKVNLPEVRVQVWFQNRRAKWRRQEKLEVSSIKLQESSMLSIPRSGPLSLGSGLPLEPWLTGPISTSSSPLQSLPSFITPQQAVPASYTPPQFLSSSTLNHSLPHIGAVCPPYQCSGFMDKFSLQEADPRNTSIASLRMKAKEHIQSIGKTW.

A disordered region spans residues 1–27 (MRLVGSQYKDMEDRLSPSARLVRSPGS). The short motif at 32 to 39 (HSIESILG) is the Octapeptide motif element. 2 disordered regions span residues 53 to 72 (GSGKTGKDTEHLSPKKDSNK) and 85 to 107 (SPDLPDADGGKLSDDENPKKKHR). Basic and acidic residues-rich tracts occupy residues 57 to 72 (TGKDTEHLSPKKDSNK) and 92 to 102 (DGGKLSDDENP). Positions 106–165 (HRRNRTTFTTFQLHELERAFEKSHYPDVYSREELALKVNLPEVRVQVWFQNRRAKWRRQE) form a DNA-binding region, homeobox. The OAR motif lies at 272 to 285 (TSIASLRMKAKEHI). The short motif at 278-282 (RMKAK) is the Nuclear localization signal element.

The protein belongs to the paired homeobox family. Bicoid subfamily.

It localises to the nucleus. Plays a critical role in eye formation by regulating the initial specification of retinal cells and/or their subsequent proliferation. The polypeptide is Retinal homeobox protein Rx3 (rx3) (Danio rerio (Zebrafish)).